We begin with the raw amino-acid sequence, 74 residues long: DNA-directed RNA polymerase subunit omega (74 aa).

This sequence belongs to the RNA polymerase subunit omega family. The RNAP catalytic core consists of 2 alpha, 1 beta, 1 beta' and 1 omega subunit. When a sigma factor is associated with the core the holoenzyme is formed, which can initiate transcription.

It catalyses the reaction RNA(n) + a ribonucleoside 5'-triphosphate = RNA(n+1) + diphosphate. Functionally, promotes RNA polymerase assembly. Latches the N- and C-terminal regions of the beta' subunit thereby facilitating its interaction with the beta and alpha subunits. In Lactobacillus acidophilus (strain ATCC 700396 / NCK56 / N2 / NCFM), this protein is DNA-directed RNA polymerase subunit omega.